Reading from the N-terminus, the 58-residue chain is Large ribosomal subunit protein uL24 (58 aa).

The protein belongs to the universal ribosomal protein uL24 family. As to quaternary structure, part of the 50S ribosomal subunit.

Its function is as follows. One of two assembly initiator proteins, it binds directly to the 5'-end of the 23S rRNA, where it nucleates assembly of the 50S subunit. In terms of biological role, one of the proteins that surrounds the polypeptide exit tunnel on the outside of the subunit. The protein is Large ribosomal subunit protein uL24 (rplX) of Spiroplasma citri.